The sequence spans 117 residues: MDKKAARIRRATRARRKLKELGATRLVVHRTPRHIYAQVIAPNGSEILVAASTVEKAINEQLKYAGNKDAAAAVGKTIAERALEKGITKVSFDRSGFQYHGRVQALADAAREAGLQF.

The protein belongs to the universal ribosomal protein uL18 family. Part of the 50S ribosomal subunit; part of the 5S rRNA/L5/L18/L25 subcomplex. Contacts the 5S and 23S rRNAs.

In terms of biological role, this is one of the proteins that bind and probably mediate the attachment of the 5S RNA into the large ribosomal subunit, where it forms part of the central protuberance. The sequence is that of Large ribosomal subunit protein uL18 from Yersinia pseudotuberculosis serotype O:1b (strain IP 31758).